We begin with the raw amino-acid sequence, 121 residues long: MLVIFLGILGLLANQVSSQLVGQLHSTENPSENELEYWCTYMECCQFCWDCQNGLCVHKLGNTTILENEYVHPCIVSRWLNKCMYDLGQGIDHVMVCSQPKHWNPYKILKKEWKENNSQNI.

Residues 1 to 20 (MLVIFLGILGLLANQVSSQL) form the signal peptide. Residues Asn-62 and Asn-116 are each glycosylated (N-linked (GlcNAc...) asparagine; by host).

The protein belongs to the asfivirus MGF 110 family.

The polypeptide is Protein MGF 110-5L (African swine fever virus (isolate Portugal/Lis 57/1957) (ASFV)).